The sequence spans 480 residues: Adenylosuccinate lyase (480 aa).

AMP is bound by residues R14, Y15, R79, H80, and D81. Position 80 (H80) interacts with fumarate. H153 (proton donor/acceptor) is an active-site residue. AMP is bound at residue Q236. Q236 serves as a coordination point for fumarate. Q236 is a binding site for N(6)-(1,2-dicarboxyethyl)-AMP. Catalysis depends on S284, which acts as the Proton donor/acceptor. S285, K290, and N292 together coordinate fumarate. 3 residues coordinate N(6)-(1,2-dicarboxyethyl)-AMP: S285, K290, and N292. R298 contributes to the AMP binding site. Residues R324, S329, and R333 each contribute to the N(6)-(1,2-dicarboxyethyl)-AMP site. AMP is bound by residues S329 and R333.

The protein belongs to the lyase 1 family. Adenylosuccinate lyase subfamily. As to quaternary structure, homotetramer.

It carries out the reaction N(6)-(1,2-dicarboxyethyl)-AMP = fumarate + AMP. Its pathway is purine metabolism; AMP biosynthesis via salvage pathway. In terms of biological role, catalyzes conversion of succinyladenosine monophosphate (SAMP) to AMP and fumarate on the purine salvage pathway. In Schistosoma mansoni (Blood fluke), this protein is Adenylosuccinate lyase.